Here is a 2346-residue protein sequence, read N- to C-terminus: Acetyl-CoA carboxylase 1 (2346 aa).

Met-1 carries the N-acetylmethionine modification. Ser-5, Ser-23, Ser-25, Ser-29, Ser-34, Ser-48, Ser-50, and Ser-53 each carry phosphoserine. The residue at position 58 (Thr-58) is a Phosphothreonine. Residues Ser-78 and Ser-80 each carry the phosphoserine modification. In terms of domain architecture, Biotin carboxylation spans 117 to 618 (VIEKVLIANN…DTGWLDRLIA (502 aa)). Residues 275–466 (SKRILNVPQE…LPAAQLQIAM (192 aa)) enclose the ATP-grasp domain. Position 315-320 (315-320 (GGGGKG)) interacts with ATP. Mg(2+) contacts are provided by Glu-424, Glu-437, and Asn-439. Glu-424, Glu-437, and Asn-439 together coordinate Mn(2+). The active site involves Arg-441. At Ser-488 the chain carries Phosphoserine. At Thr-610 the chain carries Phosphothreonine. Residues 745–819 (FEKENDPSVM…DPGCVLAKMQ (75 aa)) form the Biotinyl-binding domain. Lys-786 carries the N6-biotinyllysine modification. Ser-835, Ser-1201, Ser-1216, and Ser-1218 each carry phosphoserine. Thr-1227 is subject to Phosphothreonine. Residues Ser-1259, Ser-1263, and Ser-1273 each carry the phosphoserine modification. N6-acetyllysine is present on Lys-1334. In terms of domain architecture, CoA carboxyltransferase N-terminal spans 1576–1914 (PYVTKDLLQS…SVHSSVPLLN (339 aa)). Residues 1576 to 2234 (PYVTKDLLQS…EDLVKKKIHN (659 aa)) form a carboxyltransferase region. The CoA site is built by Arg-1823, Lys-2127, and Arg-2129. One can recognise a CoA carboxyltransferase C-terminal domain in the interval 1918–2234 (PIDRIIEFVP…EDLVKKKIHN (317 aa)). The residue at position 2153 (Thr-2153) is a Phosphothreonine.

As to quaternary structure, monomer, homodimer, and homotetramer. Can form filamentous polymers. Interacts in its inactive phosphorylated form with the BRCT domains of BRCA1 which prevents ACACA dephosphorylation and inhibits lipid synthesis. Interacts with MID1IP1; interaction with MID1IP1 promotes oligomerization and increases its activity. It depends on Mg(2+) as a cofactor. Requires Mn(2+) as cofactor. Biotin serves as cofactor. Post-translationally, phosphorylation on Ser-1263 is required for interaction with BRCA1. Phosphorylation at Ser-80 by AMPK inactivates enzyme activity. In terms of processing, the biotin cofactor is covalently attached to the central biotinyl-binding domain and is required for the catalytic activity. Expressed in brain, placenta, skeletal muscle, renal, pancreatic and adipose tissues; expressed at low level in pulmonary tissue; not detected in the liver.

The protein localises to the cytoplasm. The protein resides in the cytosol. It carries out the reaction hydrogencarbonate + acetyl-CoA + ATP = malonyl-CoA + ADP + phosphate + H(+). Its pathway is lipid metabolism; malonyl-CoA biosynthesis; malonyl-CoA from acetyl-CoA: step 1/1. With respect to regulation, inhibited by phosphorylation. Citrate promotes oligomerization of the protein into filaments that correspond to the most active form of the carboxylase. Inhibited by palmitoyl-CoA. In terms of biological role, cytosolic enzyme that catalyzes the carboxylation of acetyl-CoA to malonyl-CoA, the first and rate-limiting step of de novo fatty acid biosynthesis. This is a 2 steps reaction starting with the ATP-dependent carboxylation of the biotin carried by the biotin carboxyl carrier (BCC) domain followed by the transfer of the carboxyl group from carboxylated biotin to acetyl-CoA. The polypeptide is Acetyl-CoA carboxylase 1 (Homo sapiens (Human)).